The chain runs to 214 residues: Zinc finger protein 11 (214 aa).

Residues 1-27 (MKRTHLASFSNRDKTQEEEGEDGNGDN) are disordered. A C2H2-type zinc finger spans residues 49-71 (YTCSFCRREFRSAQALGGHMNVH). Residues 72–79 (RRDRAKLR) carry the Nuclear localization signal motif. Residues 89–130 (HHHTPIANPNPNFSSSSSSSTTTAHLEPSLTNQRSKTTPFPS) form a disordered region. The span at 102–111 (SSSSSSSTTT) shows a compositional bias: low complexity. Residues 117–128 (SLTNQRSKTTPF) are compositionally biased toward polar residues.

As to expression, expressed in roots, stems, axillary buds and flowers.

It is found in the nucleus. In terms of biological role, probable transcription factor that may regulate cell division and growth. The sequence is that of Zinc finger protein 11 from Arabidopsis thaliana (Mouse-ear cress).